A 488-amino-acid polypeptide reads, in one-letter code: Glutamyl-tRNA(Gln) amidotransferase subunit A (488 aa).

Catalysis depends on charge relay system residues lysine 78 and serine 153. Residue serine 177 is the Acyl-ester intermediate of the active site.

It belongs to the amidase family. GatA subfamily. As to quaternary structure, heterotrimer of A, B and C subunits.

It catalyses the reaction L-glutamyl-tRNA(Gln) + L-glutamine + ATP + H2O = L-glutaminyl-tRNA(Gln) + L-glutamate + ADP + phosphate + H(+). Functionally, allows the formation of correctly charged Gln-tRNA(Gln) through the transamidation of misacylated Glu-tRNA(Gln) in organisms which lack glutaminyl-tRNA synthetase. The reaction takes place in the presence of glutamine and ATP through an activated gamma-phospho-Glu-tRNA(Gln). The sequence is that of Glutamyl-tRNA(Gln) amidotransferase subunit A from Solidesulfovibrio magneticus (strain ATCC 700980 / DSM 13731 / RS-1) (Desulfovibrio magneticus).